The chain runs to 497 residues: RNA polymerase sigma factor SigA (497 aa).

2 disordered regions span residues Met1–Ser20 and Lys62–Leu86. Positions Thr63 to Pro73 are enriched in basic and acidic residues. Positions Lys74–Ala84 are enriched in basic residues. The segment at Leu250–Thr320 is sigma-70 factor domain-2. The Interaction with polymerase core subunit RpoC signature appears at Asp274–Gln277. A sigma-70 factor domain-3 region spans residues Glu329–Phe410. The sigma-70 factor domain-4 stretch occupies residues Leu423–His478. Positions Leu451 to Asn470 form a DNA-binding region, H-T-H motif.

This sequence belongs to the sigma-70 factor family. RpoD/SigA subfamily. As to quaternary structure, interacts transiently with the RNA polymerase catalytic core.

The protein localises to the cytoplasm. Sigma factors are initiation factors that promote the attachment of RNA polymerase to specific initiation sites and are then released. This sigma factor is the primary sigma factor during exponential growth. The sequence is that of RNA polymerase sigma factor SigA from Mycoplasma genitalium (strain ATCC 33530 / DSM 19775 / NCTC 10195 / G37) (Mycoplasmoides genitalium).